The sequence spans 457 residues: Argininosuccinate lyase (457 aa).

Belongs to the lyase 1 family. Argininosuccinate lyase subfamily.

The protein localises to the cytoplasm. The catalysed reaction is 2-(N(omega)-L-arginino)succinate = fumarate + L-arginine. It functions in the pathway amino-acid biosynthesis; L-arginine biosynthesis; L-arginine from L-ornithine and carbamoyl phosphate: step 3/3. This Cronobacter sakazakii (strain ATCC BAA-894) (Enterobacter sakazakii) protein is Argininosuccinate lyase.